A 225-amino-acid polypeptide reads, in one-letter code: Cyanamide hydratase DDI2 (225 aa).

Residues 52-162 form the HD domain; sequence VLNHSLRVFQ…LQIATTLDNV (111 aa).

The protein belongs to the cyanamide dehydrase family. As to quaternary structure, homohexamer. Zn(2+) serves as cofactor.

The enzyme catalyses urea = cyanamide + H2O. Functionally, cyanamide hydratase involved in the detoxification and/or utilization of cyanamide, a toxic nitrile compound distributed widely in the environment. In Saccharomyces cerevisiae (strain ATCC 204508 / S288c) (Baker's yeast), this protein is Cyanamide hydratase DDI2.